Consider the following 209-residue polypeptide: Redox-sensing transcriptional repressor Rex (209 aa).

A DNA-binding region (H-T-H motif) is located at residues 16–55 (LYYRFIQNLSLSGKQRVSSAELSEAVKVDSATIRRDFSYF). 90 to 95 (GVGNLG) lines the NAD(+) pocket.

This sequence belongs to the transcriptional regulatory Rex family. Homodimer.

The protein localises to the cytoplasm. Its function is as follows. Modulates transcription in response to changes in cellular NADH/NAD(+) redox state. This is Redox-sensing transcriptional repressor Rex from Bacillus cereus (strain AH187).